Here is a 677-residue protein sequence, read N- to C-terminus: Methionine--tRNA ligase (677 aa).

A 'HIGH' region motif is present at residues 15–25; it reads PYANGSIHLGH. 4 residues coordinate Zn(2+): Cys-146, Cys-149, Cys-159, and Cys-162. The short motif at 333–337 is the 'KMSKS' region element; that stretch reads KMSKS. Residue Lys-336 participates in ATP binding. One can recognise a tRNA-binding domain in the interval 575–677; sequence DFAKIDLRVA…DGAKPGQQVK (103 aa).

This sequence belongs to the class-I aminoacyl-tRNA synthetase family. MetG type 1 subfamily. As to quaternary structure, homodimer. Zn(2+) serves as cofactor.

It is found in the cytoplasm. It carries out the reaction tRNA(Met) + L-methionine + ATP = L-methionyl-tRNA(Met) + AMP + diphosphate. In terms of biological role, is required not only for elongation of protein synthesis but also for the initiation of all mRNA translation through initiator tRNA(fMet) aminoacylation. In Salmonella typhimurium (strain LT2 / SGSC1412 / ATCC 700720), this protein is Methionine--tRNA ligase.